Consider the following 125-residue polypeptide: Small ribosomal subunit protein uS11m (125 aa).

It belongs to the universal ribosomal protein uS11 family.

It localises to the mitochondrion. This is Small ribosomal subunit protein uS11m (RPS11) from Marchantia polymorpha (Common liverwort).